Here is a 334-residue protein sequence, read N- to C-terminus: Putative B3 domain-containing protein At3g49610 (334 aa).

Disordered stretches follow at residues 69–89 (ERRTLGSSPTKTNTLFEGSEK) and 133–178 (DEFE…KFDP). Polar residues-rich tracts occupy residues 73 to 84 (LGSSPTKTNTLF) and 141 to 157 (KSPTIRNSQSSPSSCLM). The segment covering 161–173 (KRKRYQSSGKSKK) has biased composition (basic residues). Residues 229 to 334 (FNKLLRNDFL…GVLCFALEKE (106 aa)) constitute a DNA-binding region (TF-B3).

The protein localises to the nucleus. This chain is Putative B3 domain-containing protein At3g49610, found in Arabidopsis thaliana (Mouse-ear cress).